The chain runs to 169 residues: NADH-quinone oxidoreductase subunit B (169 aa).

[4Fe-4S] cluster-binding residues include cysteine 42, cysteine 43, cysteine 107, and cysteine 136.

Belongs to the complex I 20 kDa subunit family. NDH-1 is composed of 14 different subunits. Subunits NuoB, C, D, E, F, and G constitute the peripheral sector of the complex. The cofactor is [4Fe-4S] cluster.

Its subcellular location is the cell inner membrane. The catalysed reaction is a quinone + NADH + 5 H(+)(in) = a quinol + NAD(+) + 4 H(+)(out). Functionally, NDH-1 shuttles electrons from NADH, via FMN and iron-sulfur (Fe-S) centers, to quinones in the respiratory chain. Couples the redox reaction to proton translocation (for every two electrons transferred, four hydrogen ions are translocated across the cytoplasmic membrane), and thus conserves the redox energy in a proton gradient. In Campylobacter hominis (strain ATCC BAA-381 / DSM 21671 / CCUG 45161 / LMG 19568 / NCTC 13146 / CH001A), this protein is NADH-quinone oxidoreductase subunit B.